The chain runs to 436 residues: Glutamyl-tRNA reductase (436 aa).

Substrate is bound by residues 49–52, Ser109, 114–116, and Gln120; these read TCNR and EGQ. The active-site Nucleophile is the Cys50. Position 198–203 (198–203) interacts with NADP(+); the sequence is GAGRMS.

It belongs to the glutamyl-tRNA reductase family. In terms of assembly, homodimer.

It carries out the reaction (S)-4-amino-5-oxopentanoate + tRNA(Glu) + NADP(+) = L-glutamyl-tRNA(Glu) + NADPH + H(+). It functions in the pathway porphyrin-containing compound metabolism; protoporphyrin-IX biosynthesis; 5-aminolevulinate from L-glutamyl-tRNA(Glu): step 1/2. Its pathway is porphyrin-containing compound metabolism; chlorophyll biosynthesis. Catalyzes the NADPH-dependent reduction of glutamyl-tRNA(Glu) to glutamate 1-semialdehyde (GSA). The chain is Glutamyl-tRNA reductase from Prochlorococcus marinus (strain MIT 9312).